Consider the following 310-residue polypeptide: GMP synthase [glutamine-hydrolyzing] subunit B (310 aa).

Positions 2-185 (FDPKKFIDEA…LGLPDSIVYR (184 aa)) constitute a GMPS ATP-PPase domain. 29 to 35 (SGGVDSS) contacts ATP.

As to quaternary structure, heterodimer composed of a glutamine amidotransferase subunit (A) and a GMP-binding subunit (B).

It carries out the reaction XMP + L-glutamine + ATP + H2O = GMP + L-glutamate + AMP + diphosphate + 2 H(+). Its pathway is purine metabolism; GMP biosynthesis; GMP from XMP (L-Gln route): step 1/1. Its function is as follows. Catalyzes the synthesis of GMP from XMP. In Methanocaldococcus jannaschii (strain ATCC 43067 / DSM 2661 / JAL-1 / JCM 10045 / NBRC 100440) (Methanococcus jannaschii), this protein is GMP synthase [glutamine-hydrolyzing] subunit B (guaAB).